Here is a 331-residue protein sequence, read N- to C-terminus: Major outer membrane protein P.IB (331 aa).

An N-terminal signal peptide occupies residues 1–19; sequence MKKSLIALTLAALPVAAMA.

It belongs to the Gram-negative porin family. In terms of assembly, homotrimer.

Its subcellular location is the cell outer membrane. Its function is as follows. Serves as a slightly cation selective porin. In Neisseria meningitidis serogroup B (strain ATCC BAA-335 / MC58), this protein is Major outer membrane protein P.IB (porB).